The sequence spans 1267 residues: Ankyrin repeat and ELMO domain-containing protein D (1267 aa).

The region spanning 307–466 (SHQRLLETLW…FVSGLASEVL (160 aa)) is the ELMO domain. Residues 486–496 (KKKEKKSEKRG) are compositionally biased toward basic and acidic residues. The interval 486-598 (KKKEKKSEKR…NNHILNNNHL (113 aa)) is disordered. Positions 507 to 598 (GSNGNINSTT…NNHILNNNHL (92 aa)) are enriched in low complexity. 4 ANK repeats span residues 655–685 (DGNS…FLNT), 689–718 (QGLT…DPFI), 767–796 (TLET…NINN), and 801–830 (SGQN…DPSI). 4 disordered regions span residues 854 to 908 (NPTK…NSTS), 924 to 1040 (TSIN…SPIF), 1057 to 1082 (SPTQ…NGAE), and 1103 to 1215 (ENLT…PPKD). Composition is skewed to low complexity over residues 859–870 (SRSTSSTSSSTS), 895–908 (ITNN…NSTS), and 924–1033 (TSIN…STSP). The span at 1057–1080 (SPTQESPQVISTPTSPPYLSNNNG) shows a compositional bias: polar residues. Composition is skewed to low complexity over residues 1108 to 1176 (NSGN…IGSH) and 1184 to 1213 (HNGP…VTPP).

The protein is Ankyrin repeat and ELMO domain-containing protein D (elmoD) of Dictyostelium discoideum (Social amoeba).